Reading from the N-terminus, the 387-residue chain is 3-ketoacyl-CoA thiolase (387 aa).

Residue Cys91 is the Acyl-thioester intermediate of the active site. Residues His343 and Cys373 each act as proton acceptor in the active site.

Belongs to the thiolase-like superfamily. Thiolase family. As to quaternary structure, heterotetramer of two alpha chains (FadB) and two beta chains (FadA).

The protein localises to the cytoplasm. It catalyses the reaction an acyl-CoA + acetyl-CoA = a 3-oxoacyl-CoA + CoA. It participates in lipid metabolism; fatty acid beta-oxidation. In terms of biological role, catalyzes the final step of fatty acid oxidation in which acetyl-CoA is released and the CoA ester of a fatty acid two carbons shorter is formed. This is 3-ketoacyl-CoA thiolase from Idiomarina loihiensis (strain ATCC BAA-735 / DSM 15497 / L2-TR).